Consider the following 307-residue polypeptide: Quinolinate synthase (307 aa).

Iminosuccinate contacts are provided by histidine 20 and serine 37. Position 82 (cysteine 82) interacts with [4Fe-4S] cluster. Residues tyrosine 108–asparagine 110 and serine 125 each bind iminosuccinate. Cysteine 168 is a [4Fe-4S] cluster binding site. Residues histidine 194–glutamate 196 and threonine 219 contribute to the iminosuccinate site. Cysteine 264 provides a ligand contact to [4Fe-4S] cluster.

It belongs to the quinolinate synthase family. Type 2 subfamily. The cofactor is [4Fe-4S] cluster.

Its subcellular location is the cytoplasm. The enzyme catalyses iminosuccinate + dihydroxyacetone phosphate = quinolinate + phosphate + 2 H2O + H(+). It functions in the pathway cofactor biosynthesis; NAD(+) biosynthesis; quinolinate from iminoaspartate: step 1/1. Catalyzes the condensation of iminoaspartate with dihydroxyacetone phosphate to form quinolinate. This is Quinolinate synthase from Pyrobaculum aerophilum (strain ATCC 51768 / DSM 7523 / JCM 9630 / CIP 104966 / NBRC 100827 / IM2).